A 364-amino-acid chain; its full sequence is Phosphoserine aminotransferase (364 aa).

An L-glutamate-binding site is contributed by Arg-41. Pyridoxal 5'-phosphate is bound by residues 75-76 (AS), Trp-100, Thr-155, Asp-175, and Gln-198. Lys-199 bears the N6-(pyridoxal phosphate)lysine mark. 239–240 (NT) serves as a coordination point for pyridoxal 5'-phosphate.

It belongs to the class-V pyridoxal-phosphate-dependent aminotransferase family. SerC subfamily. As to quaternary structure, homodimer. Pyridoxal 5'-phosphate is required as a cofactor.

The protein localises to the cytoplasm. It catalyses the reaction O-phospho-L-serine + 2-oxoglutarate = 3-phosphooxypyruvate + L-glutamate. The enzyme catalyses 4-(phosphooxy)-L-threonine + 2-oxoglutarate = (R)-3-hydroxy-2-oxo-4-phosphooxybutanoate + L-glutamate. The protein operates within amino-acid biosynthesis; L-serine biosynthesis; L-serine from 3-phospho-D-glycerate: step 2/3. Its function is as follows. Catalyzes the reversible conversion of 3-phosphohydroxypyruvate to phosphoserine and of 3-hydroxy-2-oxo-4-phosphonooxybutanoate to phosphohydroxythreonine. The chain is Phosphoserine aminotransferase from Streptococcus uberis (strain ATCC BAA-854 / 0140J).